The following is a 438-amino-acid chain: uncharacterized protein (438 aa).

H59 lines the Zn(2+) pocket. The Proton acceptor role is filled by E62. 2 residues coordinate Zn(2+): H63 and E139.

It belongs to the peptidase M16 family. Zn(2+) serves as cofactor.

This is an uncharacterized protein from Mycobacterium tuberculosis (strain CDC 1551 / Oshkosh).